The sequence spans 692 residues: Elongation factor G (692 aa).

The 276-residue stretch at 8-283 (DRYRNIGIMA…AVVDFLPSPL (276 aa)) folds into the tr-type G domain. GTP-binding positions include 17-24 (AHIDAGKT), 81-85 (DTPGH), and 135-138 (NKMD).

This sequence belongs to the TRAFAC class translation factor GTPase superfamily. Classic translation factor GTPase family. EF-G/EF-2 subfamily.

Its subcellular location is the cytoplasm. Catalyzes the GTP-dependent ribosomal translocation step during translation elongation. During this step, the ribosome changes from the pre-translocational (PRE) to the post-translocational (POST) state as the newly formed A-site-bound peptidyl-tRNA and P-site-bound deacylated tRNA move to the P and E sites, respectively. Catalyzes the coordinated movement of the two tRNA molecules, the mRNA and conformational changes in the ribosome. In Rhodospirillum rubrum (strain ATCC 11170 / ATH 1.1.1 / DSM 467 / LMG 4362 / NCIMB 8255 / S1), this protein is Elongation factor G.